The following is a 424-amino-acid chain: CinA-like protein (424 aa).

It belongs to the CinA family.

This chain is CinA-like protein, found in Syntrophobacter fumaroxidans (strain DSM 10017 / MPOB).